The following is a 314-amino-acid chain: GTP cyclohydrolase FolE2 (314 aa).

Positions 290-314 are disordered; that stretch reads DASAWSAPQAAAPDQQESFATGNER. Positions 291–304 are enriched in low complexity; sequence ASAWSAPQAAAPDQ. Positions 305-314 are enriched in polar residues; sequence QESFATGNER.

The protein belongs to the GTP cyclohydrolase IV family.

It catalyses the reaction GTP + H2O = 7,8-dihydroneopterin 3'-triphosphate + formate + H(+). Its pathway is cofactor biosynthesis; 7,8-dihydroneopterin triphosphate biosynthesis; 7,8-dihydroneopterin triphosphate from GTP: step 1/1. In terms of biological role, converts GTP to 7,8-dihydroneopterin triphosphate. This Pseudomonas putida (strain ATCC 47054 / DSM 6125 / CFBP 8728 / NCIMB 11950 / KT2440) protein is GTP cyclohydrolase FolE2.